The chain runs to 105 residues: Biogenesis of lysosome-related organelles complex 1 subunit SNN1 (105 aa).

Residues 70–105 (WKDDNERLDSLRKRVDSLKSRFQSLKLRSDKLEQRE) are a coiled coil.

It belongs to the SNAPIN family. In terms of assembly, component of the biogenesis of lysosome-related organelles complex-1 (BLOC-1).

It localises to the endosome. Component of the biogenesis of lysosome-related organelles complex-1 (BLOC-1), a complex involved in endosomal cargo sorting. The protein is Biogenesis of lysosome-related organelles complex 1 subunit SNN1 (SNN1) of Zygosaccharomyces rouxii (strain ATCC 2623 / CBS 732 / NBRC 1130 / NCYC 568 / NRRL Y-229).